Reading from the N-terminus, the 274-residue chain is NH(3)-dependent NAD(+) synthetase (274 aa).

Residue 46-53 participates in ATP binding; the sequence is GISGGQDS. Asp52 contacts Mg(2+). Residue Arg140 participates in deamido-NAD(+) binding. An ATP-binding site is contributed by Thr160. Glu165 lines the Mg(2+) pocket. Deamido-NAD(+) is bound by residues Lys173 and Asp180. ATP contacts are provided by Lys189 and Thr211. A deamido-NAD(+)-binding site is contributed by 260-261; it reads HK.

The protein belongs to the NAD synthetase family. In terms of assembly, homodimer.

It catalyses the reaction deamido-NAD(+) + NH4(+) + ATP = AMP + diphosphate + NAD(+) + H(+). The protein operates within cofactor biosynthesis; NAD(+) biosynthesis; NAD(+) from deamido-NAD(+) (ammonia route): step 1/1. Its function is as follows. Catalyzes the ATP-dependent amidation of deamido-NAD to form NAD. Uses ammonia as a nitrogen source. This Streptococcus suis (strain 05ZYH33) protein is NH(3)-dependent NAD(+) synthetase.